A 347-amino-acid polypeptide reads, in one-letter code: Quinolinate synthase (347 aa).

Iminosuccinate-binding residues include His47 and Ser68. A [4Fe-4S] cluster-binding site is contributed by Cys113. Residues Tyr139–Asn141 and Ser156 each bind iminosuccinate. Cys200 lines the [4Fe-4S] cluster pocket. Iminosuccinate is bound by residues His226–Glu228 and Thr243. Cys297 contacts [4Fe-4S] cluster.

This sequence belongs to the quinolinate synthase family. Type 1 subfamily. [4Fe-4S] cluster serves as cofactor.

It is found in the cytoplasm. It carries out the reaction iminosuccinate + dihydroxyacetone phosphate = quinolinate + phosphate + 2 H2O + H(+). It participates in cofactor biosynthesis; NAD(+) biosynthesis; quinolinate from iminoaspartate: step 1/1. Catalyzes the condensation of iminoaspartate with dihydroxyacetone phosphate to form quinolinate. The polypeptide is Quinolinate synthase (Escherichia coli O139:H28 (strain E24377A / ETEC)).